We begin with the raw amino-acid sequence, 265 residues long: (-)-isopiperitenol/(-)-carveol dehydrogenase, mitochondrial (265 aa).

A mitochondrion-targeting transit peptide spans 1 to 30; that stretch reads MASVKKLAGKVAIVTGGASGIGEVTARLFA. Residue 13–38 participates in NAD(+) binding; sequence IVTGGASGIGEVTARLFAERGARAVV. Residue Ser147 coordinates substrate. The Proton acceptor role is filled by Tyr160.

The protein belongs to the short-chain dehydrogenases/reductases (SDR) family. As to quaternary structure, homodimer and homotetramer. In terms of tissue distribution, peltate glandular trichomes.

It localises to the mitochondrion. It carries out the reaction (1S,6R)-isopiperitenol + NAD(+) = (6R)-isopiperitenone + NADH + H(+). The catalysed reaction is (1S,5R)-carveol + NADP(+) = (R)-carvone + NADPH + H(+). Functionally, involved in the biosynthesis of menthol and related monoterpenes in leaves. Can use (-)-trans-carveol and, with a lower relative velocity, (-)-trans-isopiperitenol, (+)-neomenthol, (+)-neoisomenthol and (-)-cis-isopiperitenol as substrates, but not (-)-cis-carvenol, (-)-menthol, (+)-isomenthol, 7-hydroxy-limonene, (-)-isopiperitenone or (-)-carvone. The sequence is that of (-)-isopiperitenol/(-)-carveol dehydrogenase, mitochondrial from Mentha piperita (Peppermint).